The primary structure comprises 279 residues: Phosphatidylglycerol--prolipoprotein diacylglyceryl transferase (279 aa).

The next 3 helical transmembrane spans lie at 18–38 (LSVR…YFVA), 55–75 (IIFY…VIFQ), and 89–109 (IWHG…AGVI). Residue Arg137 participates in a 1,2-diacyl-sn-glycero-3-phospho-(1'-sn-glycerol) binding. Transmembrane regions (helical) follow at residues 203–223 (LGET…FIEG) and 235–255 (IRVA…LIVY).

Belongs to the Lgt family.

The protein localises to the cell membrane. The catalysed reaction is L-cysteinyl-[prolipoprotein] + a 1,2-diacyl-sn-glycero-3-phospho-(1'-sn-glycerol) = an S-1,2-diacyl-sn-glyceryl-L-cysteinyl-[prolipoprotein] + sn-glycerol 1-phosphate + H(+). The protein operates within protein modification; lipoprotein biosynthesis (diacylglyceryl transfer). Catalyzes the transfer of the diacylglyceryl group from phosphatidylglycerol to the sulfhydryl group of the N-terminal cysteine of a prolipoprotein, the first step in the formation of mature lipoproteins. This is Phosphatidylglycerol--prolipoprotein diacylglyceryl transferase from Staphylococcus aureus (strain MSSA476).